The primary structure comprises 550 residues: Endonuclease/exonuclease/phosphatase family domain-containing protein 1 (550 aa).

The HhH domain occupies 39–68; it reads ERLNINTATEEELMTLPGVNRGVAQNIVEY. Residues 194-213 are compositionally biased toward polar residues; it reads STNTNGGFTHPSPTSFSVQS. Residues 194-216 form a disordered region; the sequence is STNTNGGFTHPSPTSFSVQSDEP.

The chain is Endonuclease/exonuclease/phosphatase family domain-containing protein 1 (eepd1) from Danio rerio (Zebrafish).